A 155-amino-acid polypeptide reads, in one-letter code: Transcriptional regulator MraZ (155 aa).

2 consecutive SpoVT-AbrB domains span residues 5-52 (TYEN…SQDR) and 81-124 (SMNL…EPAA).

It belongs to the MraZ family. As to quaternary structure, forms oligomers.

Its subcellular location is the cytoplasm. It localises to the nucleoid. In Pelagibacter ubique (strain HTCC1062), this protein is Transcriptional regulator MraZ.